The chain runs to 417 residues: UDP-N-acetylglucosamine 1-carboxyvinyltransferase (417 aa).

22–23 (KN) contributes to the phosphoenolpyruvate binding site. A UDP-N-acetyl-alpha-D-glucosamine-binding site is contributed by Arg-92. Cys-116 acts as the Proton donor in catalysis. Cys-116 bears the 2-(S-cysteinyl)pyruvic acid O-phosphothioketal mark. UDP-N-acetyl-alpha-D-glucosamine is bound by residues Asp-304 and Ile-326.

Belongs to the EPSP synthase family. MurA subfamily.

The protein resides in the cytoplasm. The catalysed reaction is phosphoenolpyruvate + UDP-N-acetyl-alpha-D-glucosamine = UDP-N-acetyl-3-O-(1-carboxyvinyl)-alpha-D-glucosamine + phosphate. Its pathway is cell wall biogenesis; peptidoglycan biosynthesis. Its function is as follows. Cell wall formation. Adds enolpyruvyl to UDP-N-acetylglucosamine. In Geobacter sulfurreducens (strain ATCC 51573 / DSM 12127 / PCA), this protein is UDP-N-acetylglucosamine 1-carboxyvinyltransferase.